A 244-amino-acid chain; its full sequence is MSTNPKPAYRRVLLKLSGEALQGSEGFGIDPAVLDRMAQEIKELVELGVQVGLVIGGGNLFRGAGLAKAGMNRVVGDHMGMLATVMNGLAMRDALHRAYVNARLMSAISLQGICDSYVWAEAISQLRAGKVVIFSAGTGNPFFTTDSAACLRGIEIEADVVLKATKVDGVFTDDPVKNPDAVLCHELSYDEVLEKELKVMDLAAFTLARDHDLPIRVFNMNKPGALRRVIMGEPEGTLIHHVSK.

Residue 15 to 18 (KLSG) coordinates ATP. The tract at residues 23-28 (GSEGFG) is involved in allosteric activation by GTP. Position 57 (Gly57) interacts with UMP. ATP contacts are provided by Gly58 and Arg62. Residues Asp77 and 138-145 (TGNPFFTT) each bind UMP. Residues Thr165, Phe171, and Asp174 each coordinate ATP.

It belongs to the UMP kinase family. As to quaternary structure, homohexamer.

Its subcellular location is the cytoplasm. The enzyme catalyses UMP + ATP = UDP + ADP. Its pathway is pyrimidine metabolism; CTP biosynthesis via de novo pathway; UDP from UMP (UMPK route): step 1/1. Allosterically activated by GTP. Inhibited by UTP. In terms of biological role, catalyzes the reversible phosphorylation of UMP to UDP. The polypeptide is Uridylate kinase (Aeromonas hydrophila subsp. hydrophila (strain ATCC 7966 / DSM 30187 / BCRC 13018 / CCUG 14551 / JCM 1027 / KCTC 2358 / NCIMB 9240 / NCTC 8049)).